A 522-amino-acid chain; its full sequence is Hydroxymethylglutaryl-CoA synthase, cytoplasmic (522 aa).

2 residues coordinate (3S)-3-hydroxy-3-methylglutaryl-CoA: aspartate 43 and alanine 44. Glutamate 95 acts as the Proton donor/acceptor in catalysis. Residues cysteine 129, asparagine 167, threonine 171, serine 221, histidine 264, lysine 273, asparagine 344, and serine 378 each coordinate (3S)-3-hydroxy-3-methylglutaryl-CoA. Cysteine 129 acts as the Acyl-thioester intermediate in catalysis. Residue histidine 264 is the Proton donor/acceptor of the active site.

Belongs to the thiolase-like superfamily. HMG-CoA synthase family. Homodimer.

It is found in the cytoplasm. It carries out the reaction acetoacetyl-CoA + acetyl-CoA + H2O = (3S)-3-hydroxy-3-methylglutaryl-CoA + CoA + H(+). Its pathway is metabolic intermediate biosynthesis; (R)-mevalonate biosynthesis; (R)-mevalonate from acetyl-CoA: step 2/3. Functionally, catalyzes the condensation of acetyl-CoA with acetoacetyl-CoA to form HMG-CoA, which is converted by HMG-CoA reductase (HMGCR) into mevalonate, a precursor for cholesterol synthesis. In Gallus gallus (Chicken), this protein is Hydroxymethylglutaryl-CoA synthase, cytoplasmic (HMGCS1).